A 502-amino-acid polypeptide reads, in one-letter code: Lysine--tRNA ligase (502 aa).

Residues Glu403 and Glu410 each coordinate Mg(2+).

It belongs to the class-II aminoacyl-tRNA synthetase family. In terms of assembly, homodimer. It depends on Mg(2+) as a cofactor.

The protein resides in the cytoplasm. It carries out the reaction tRNA(Lys) + L-lysine + ATP = L-lysyl-tRNA(Lys) + AMP + diphosphate. In Synechococcus sp. (strain CC9605), this protein is Lysine--tRNA ligase.